The chain runs to 742 residues: MSLLLEPTPTMIKEEKLYREMGLTDEEFAMIEKILGRLPNYTETGIFSVMWSEHCSYKNSKPVLKKFPTEGKHVLQGPGEGAGIVDIGDGLAVAFKIESHNHPSAIEPYQGAATGVGGIIRDVFSMGARPIALLNSLRFGELTSPRVKYLFEHVVAGIAGYGNCVGIPTVGGEVQFDAAYEGNPLVNAMCVGIIRHEDIQRGIASGVGNTVMYVGAKTGRDGIHGATFASEELTEQSEAKRPAVQVGDPFMEKLLLEACLEVVKSDALVGIQDMGAAGLTSSSAEMASKGGFGIEMNLDLVPQREAGMTPYEMMLSESQERMLLVVKQGREQEIYELFAKYGLEAKAIGKVTDDKMLRLYFRGEVVAEIPVDALAKDAPVYHKPSKEPAYYREFQAMEPYVPAVSNYEETLLSLLAQPTIASKEWVYQQYDYMVRTNTVVAPGSDAAVLRIRGTNKALAMTTDCNSRYIYLDPETGGKIAVAEAARNIVCSGAKPLAITDCLNFGNPEKPEIFWQLEKAVDGMSEVCRVLGTPVISGNVSLYNETNGEAIYPTPVIGMVGLVEDIRHITTQAFQQAGDLIYVIGEAKQEFGGSELQKLLEGRIFGKAPEIDLATEAKRQQELLTAIQAGVVASAHDIAEGGFAVALAECVMSTNGLGAKVTVDGDITSQLFSETQSRFIVSVKKENQEKFEKLVEAKLIGEVTNDGTLLVERASGEVVIQLSVEQMRSVWKGAIPCLLKSKA.

His-54 is an active-site residue. ATP contacts are provided by Tyr-57 and Lys-96. A Mg(2+)-binding site is contributed by Glu-98. Substrate-binding positions include 99–102 and Arg-121; that span reads SHNH. His-100 functions as the Proton acceptor in the catalytic mechanism. Residue Asp-122 coordinates Mg(2+). Residue Gln-245 coordinates substrate. Asp-273 contributes to the Mg(2+) binding site. 317 to 319 contacts substrate; that stretch reads ESQ. Residues Asp-500 and Gly-537 each coordinate ATP. Asn-538 provides a ligand contact to Mg(2+). Ser-540 serves as a coordination point for substrate.

This sequence belongs to the FGAMS family. Monomer. Part of the FGAM synthase complex composed of 1 PurL, 1 PurQ and 2 PurS subunits.

The protein localises to the cytoplasm. It catalyses the reaction N(2)-formyl-N(1)-(5-phospho-beta-D-ribosyl)glycinamide + L-glutamine + ATP + H2O = 2-formamido-N(1)-(5-O-phospho-beta-D-ribosyl)acetamidine + L-glutamate + ADP + phosphate + H(+). The protein operates within purine metabolism; IMP biosynthesis via de novo pathway; 5-amino-1-(5-phospho-D-ribosyl)imidazole from N(2)-formyl-N(1)-(5-phospho-D-ribosyl)glycinamide: step 1/2. Part of the phosphoribosylformylglycinamidine synthase complex involved in the purines biosynthetic pathway. Catalyzes the ATP-dependent conversion of formylglycinamide ribonucleotide (FGAR) and glutamine to yield formylglycinamidine ribonucleotide (FGAM) and glutamate. The FGAM synthase complex is composed of three subunits. PurQ produces an ammonia molecule by converting glutamine to glutamate. PurL transfers the ammonia molecule to FGAR to form FGAM in an ATP-dependent manner. PurS interacts with PurQ and PurL and is thought to assist in the transfer of the ammonia molecule from PurQ to PurL. This is Phosphoribosylformylglycinamidine synthase subunit PurL from Geobacillus sp. (strain WCH70).